A 396-amino-acid polypeptide reads, in one-letter code: Ribosomal RNA large subunit methyltransferase I (396 aa).

One can recognise a PUA domain in the interval 2-81 (SVRLVLAKGR…ESIDIAFFSR (80 aa)).

This sequence belongs to the methyltransferase superfamily. RlmI family.

It localises to the cytoplasm. The catalysed reaction is cytidine(1962) in 23S rRNA + S-adenosyl-L-methionine = 5-methylcytidine(1962) in 23S rRNA + S-adenosyl-L-homocysteine + H(+). Its function is as follows. Specifically methylates the cytosine at position 1962 (m5C1962) of 23S rRNA. In Shigella flexneri, this protein is Ribosomal RNA large subunit methyltransferase I.